Here is a 555-residue protein sequence, read N- to C-terminus: E3 ubiquitin-protein ligase NEURL1B (555 aa).

The 157-residue stretch at 38–194 (APRFHAQAKG…ITDEVQLLES (157 aa)) folds into the NHR 1 domain. Thr-199 is subject to Phosphothreonine. Residues 279 to 433 (DLRFHATRGP…GVAGQLRLLG (155 aa)) enclose the NHR 2 domain. Residues 436 to 493 (QSSPATTTPSGSLSGSQDDSDSDMTFSVNQSSSASESSLVTAPSSPLSPPVSPVFSPP) are disordered. The span at 462–480 (SVNQSSSASESSLVTAPSS) shows a compositional bias: low complexity. Residues 481–493 (PLSPPVSPVFSPP) are compositionally biased toward pro residues. An RING-type zinc finger spans residues 503-543 (CTVCFDGEVDTVIYTCGHMCLCHSCGLRLKRQARACCPICR).

Interacts with JAG1, DLL1 and DLL4. Highest expression in brain, prostate and small intestine. In the brain the levels are higher in fetal than in adult stage. In the adult brain the highest levels are detected in the olfactory system, cerebellar cortex, optic nerve and the frontal lobe.

It localises to the cytoplasm. It catalyses the reaction S-ubiquitinyl-[E2 ubiquitin-conjugating enzyme]-L-cysteine + [acceptor protein]-L-lysine = [E2 ubiquitin-conjugating enzyme]-L-cysteine + N(6)-ubiquitinyl-[acceptor protein]-L-lysine.. It participates in protein modification; protein ubiquitination. Its function is as follows. E3 ubiquitin-protein ligase involved in regulation of the Notch pathway through influencing the stability and activity of several Notch ligands. The sequence is that of E3 ubiquitin-protein ligase NEURL1B (NEURL1B) from Homo sapiens (Human).